A 160-amino-acid polypeptide reads, in one-letter code: Cyclic pyranopterin monophosphate synthase (160 aa).

Substrate contacts are provided by residues 75 to 77 (LCH) and 113 to 114 (ME). Residue D128 is part of the active site.

The protein belongs to the MoaC family. As to quaternary structure, homohexamer; trimer of dimers.

It catalyses the reaction (8S)-3',8-cyclo-7,8-dihydroguanosine 5'-triphosphate = cyclic pyranopterin phosphate + diphosphate. The protein operates within cofactor biosynthesis; molybdopterin biosynthesis. Catalyzes the conversion of (8S)-3',8-cyclo-7,8-dihydroguanosine 5'-triphosphate to cyclic pyranopterin monophosphate (cPMP). This is Cyclic pyranopterin monophosphate synthase from Haemophilus influenzae (strain PittEE).